The following is a 158-amino-acid chain: Transcription antitermination protein NusB (158 aa).

Over residues 1 to 12 (MKRVEKRAEKQG) the composition is skewed to basic and acidic residues. Residues 1 to 20 (MKRVEKRAEKQGRGTARKSR) form a disordered region.

This sequence belongs to the NusB family.

Involved in transcription antitermination. Required for transcription of ribosomal RNA (rRNA) genes. Binds specifically to the boxA antiterminator sequence of the ribosomal RNA (rrn) operons. The polypeptide is Transcription antitermination protein NusB (Nitrosospira multiformis (strain ATCC 25196 / NCIMB 11849 / C 71)).